Consider the following 621-residue polypeptide: Type 2 DNA topoisomerase 6 subunit B (621 aa).

ATP is bound by residues Asn48, Asp80, 101–102 (SR), 111–118 (GQQGIGIS), and Lys435.

This sequence belongs to the TOP6B family. As to quaternary structure, homodimer. Heterotetramer of two Top6A and two Top6B chains.

The enzyme catalyses ATP-dependent breakage, passage and rejoining of double-stranded DNA.. Relaxes both positive and negative superturns and exhibits a strong decatenase activity. This is Type 2 DNA topoisomerase 6 subunit B from Methanosarcina mazei (strain ATCC BAA-159 / DSM 3647 / Goe1 / Go1 / JCM 11833 / OCM 88) (Methanosarcina frisia).